A 346-amino-acid polypeptide reads, in one-letter code: Glycerol-1-phosphate dehydrogenase [NAD(P)+] (346 aa).

Residues 93–97 and 115–118 contribute to the NAD(+) site; these read GSIID and TTAS. A substrate-binding site is contributed by aspartate 120. Serine 124 lines the NAD(+) pocket. Aspartate 167 lines the substrate pocket. The Zn(2+) site is built by aspartate 167 and histidine 247. Histidine 251 serves as a coordination point for substrate. Histidine 263 serves as a coordination point for Zn(2+).

It belongs to the glycerol-1-phosphate dehydrogenase family. It depends on Zn(2+) as a cofactor.

Its subcellular location is the cytoplasm. The enzyme catalyses sn-glycerol 1-phosphate + NAD(+) = dihydroxyacetone phosphate + NADH + H(+). The catalysed reaction is sn-glycerol 1-phosphate + NADP(+) = dihydroxyacetone phosphate + NADPH + H(+). Its pathway is membrane lipid metabolism; glycerophospholipid metabolism. Its function is as follows. Catalyzes the NAD(P)H-dependent reduction of dihydroxyacetonephosphate (DHAP or glycerone phosphate) to glycerol 1-phosphate (G1P). The G1P thus generated is used as the glycerophosphate backbone of phospholipids in the cellular membranes of Archaea. The chain is Glycerol-1-phosphate dehydrogenase [NAD(P)+] from Pyrococcus horikoshii (strain ATCC 700860 / DSM 12428 / JCM 9974 / NBRC 100139 / OT-3).